Reading from the N-terminus, the 258-residue chain is Transcriptional repressor AccR (258 aa).

Residues 6-61 enclose the HTH deoR-type domain; the sequence is TQDRQAKIVELLRDEQFLAIGRLTEHFQISVATARRDLSELHEAGLLRRTHGGAVS. The segment at residues 23–42 is a DNA-binding region (H-T-H motif); that stretch reads LAIGRLTEHFQISVATARRD.

In terms of biological role, represses opine catabolism and conjugal transfer of the nopaline Ti plasmid pTiC58. The polypeptide is Transcriptional repressor AccR (accR) (Agrobacterium fabrum (strain C58 / ATCC 33970) (Agrobacterium tumefaciens (strain C58))).